Reading from the N-terminus, the 393-residue chain is S-adenosylmethionine synthase 2 (393 aa).

Position 9 (glutamate 9) interacts with Mg(2+). Histidine 15 is an ATP binding site. Residue glutamate 43 participates in K(+) binding. The L-methionine site is built by glutamate 56 and glutamine 99. ATP contacts are provided by residues 167 to 169 (DGK), 235 to 238 (SGRF), aspartate 246, 252 to 253 (RK), alanine 269, lysine 273, and lysine 277. Aspartate 246 contributes to the L-methionine binding site. Lysine 277 is an L-methionine binding site.

This sequence belongs to the AdoMet synthase family. In terms of assembly, homotetramer. The cofactor is Mn(2+). Requires Mg(2+) as cofactor. It depends on Co(2+) as a cofactor. K(+) serves as cofactor.

It localises to the cytoplasm. The catalysed reaction is L-methionine + ATP + H2O = S-adenosyl-L-methionine + phosphate + diphosphate. It participates in amino-acid biosynthesis; S-adenosyl-L-methionine biosynthesis; S-adenosyl-L-methionine from L-methionine: step 1/1. In terms of biological role, catalyzes the formation of S-adenosylmethionine from methionine and ATP. The reaction comprises two steps that are both catalyzed by the same enzyme: formation of S-adenosylmethionine (AdoMet) and triphosphate, and subsequent hydrolysis of the triphosphate. The chain is S-adenosylmethionine synthase 2 (METK2) from Vitis vinifera (Grape).